Consider the following 132-residue polypeptide: MALTKPKKIPRYRRNKPEIRKVDKGIIHIRASFNNTIITVTNVLGCVISWSSAGACGFKGPKKGSAFAAQKATENVIRMVVINRATVLITGCGKGRDAALRVIHQNYIPIHAVLDVTPTPHNGCRPPVKRRI.

This sequence belongs to the universal ribosomal protein uS11 family. Part of the 30S ribosomal subunit.

The protein resides in the plastid. It localises to the chloroplast. This Gnetum parvifolium (Small-leaved jointfir) protein is Small ribosomal subunit protein uS11c.